The following is a 288-amino-acid chain: Glandicoline B O-methyltransferase roqN (288 aa).

Residues threonine 57, aspartate 82, and aspartate 109–alanine 110 contribute to the S-adenosyl-L-methionine site.

This sequence belongs to the class I-like SAM-binding methyltransferase superfamily.

The catalysed reaction is glandicoline B + S-adenosyl-L-methionine = meleagrin + S-adenosyl-L-homocysteine + H(+). Its pathway is alkaloid biosynthesis. In terms of biological role, glandicoline B O-methyltransferase; part of the gene cluster that mediates the biosynthesis of the mycotoxin meleagrin. The first stage is catalyzed by the dipeptide synthase roqA which condenses histidine and tryptophan to produce histidyltryptophanyldiketopiperazine (HTD). HTD is then converted to roquefortine C through two possible pathways. In the first pathway, prenyltransferase roqD transforms HTD to the intermediate roquefortine D, which is in turn converted to roquefortine C by the cytochrome P450 monooxygenase roqR. In the second pathway, HTD is first converted to the intermediate dehydrohistidyltryptophanyldi-ketopiperazine (DHTD) by roqR which is then prenylated by roqD to form roquefortine C. Roquefortine C can be further transformed to meleagrin via three more reactions including oxydation to glandicolin A by roqM, which is further reduced to glandicoline B by roqO. Finally, glandicoline B is converted to meleagrin by the glandicoline B O-methyltransferase roqN. More studies identified further branching and additional metabolites produced by the roquefortine/meleagrin cluster, including roquefortine F, roquefortine L, roquefortine M, roquefortine N and neoxaline. This Penicillium rubens (strain ATCC 28089 / DSM 1075 / NRRL 1951 / Wisconsin 54-1255) (Penicillium chrysogenum) protein is Glandicoline B O-methyltransferase roqN.